The sequence spans 64 residues: Large ribosomal subunit protein uL29 (64 aa).

It belongs to the universal ribosomal protein uL29 family.

The chain is Large ribosomal subunit protein uL29 from Legionella pneumophila (strain Lens).